The sequence spans 169 residues: Ion-translocating oxidoreductase complex subunit B (169 aa).

A hydrophobic region spans residues 1-23; it reads MIISIIIFSILSFILGVIVSLVS. The 4Fe-4S domain occupies 30–89; sequence SNLSLINDIDELLPQMQCAQCGYPGCYAYSQAIVDGNENIYKCIPGGKEVVLKLENLLNK. Residues Cys47, Cys50, Cys55, Cys72, Cys116, Cys119, Cys122, Cys126, Cys146, Cys149, Cys152, and Cys156 each contribute to the [4Fe-4S] cluster site. 2 4Fe-4S ferredoxin-type domains span residues 107 to 136 and 137 to 166; these read SIVE…GTYN and FRHT…KKIM.

This sequence belongs to the 4Fe4S bacterial-type ferredoxin family. RnfB subfamily. As to quaternary structure, the complex is composed of six subunits: RnfA, RnfB, RnfC, RnfD, RnfE and RnfG. Requires [4Fe-4S] cluster as cofactor.

Its subcellular location is the cell inner membrane. Functionally, part of a membrane-bound complex that couples electron transfer with translocation of ions across the membrane. The sequence is that of Ion-translocating oxidoreductase complex subunit B from Buchnera aphidicola subsp. Baizongia pistaciae (strain Bp).